Consider the following 243-residue polypeptide: MSMLCYTLIIAFLIGIWAAPKSEDNVPLGSPAKSDFSDTNCAQTHEGLKTSRNTDQHHPTPKKSEDQELGSAANIIVDPKLFQKRRFQSPRVLFSTQPPPLSRDEQSVKFLDTEDTLNRNIWANNENHPVHNQGEHSVCDSISVWVTNKTKATDIKGNTVTVMVDVNLNNEVYKQYFFETKCRNPNPVPSGCRGIDSRHWNSYCTTTDTFVKALTMEGNRASWRFIRIDTACVCVISRKTENF.

The N-terminal stretch at Met-1–Ala-18 is a signal peptide. Residues Ala-19–Asn-125 constitute a propeptide that is removed on maturation. A compositionally biased stretch (basic and acidic residues) spans Gly-47–Asp-66. Positions Gly-47–Gly-70 are disordered. 3 cysteine pairs are disulfide-bonded: Cys-139–Cys-204, Cys-182–Cys-232, and Cys-192–Cys-234. An N-linked (GlcNAc...) asparagine glycan is attached at Asn-148.

The protein belongs to the NGF-beta family. As to quaternary structure, homodimer. In terms of tissue distribution, expressed by the venom gland.

It localises to the secreted. Nerve growth factor is important for the development and maintenance of the sympathetic and sensory nervous systems. It stimulates division and differentiation of sympathetic and embryonic sensory neurons as well as basal forebrain cholinergic neurons in the brain. Its relevance in the snake venom is not clear. However, it has been shown to inhibit metalloproteinase-dependent proteolysis of platelet glycoprotein Ib alpha, suggesting a metalloproteinase inhibition to prevent metalloprotease autodigestion and/or protection against prey proteases. Binds a lipid between the two protein chains in the homodimer. The lipid-bound form promotes histamine relase from mouse mast cells, contrary to the lipid-free form. The protein is Venom nerve growth factor of Bungarus multicinctus (Many-banded krait).